The following is an 833-amino-acid chain: Leucine--tRNA ligase (833 aa).

Positions 41 to 52 match the 'HIGH' region motif; sequence PYPSGAGLHVGH. The 'KMSKS' region motif lies at 610–614; that stretch reads KMSKS. ATP is bound at residue lysine 613.

It belongs to the class-I aminoacyl-tRNA synthetase family.

The protein localises to the cytoplasm. The catalysed reaction is tRNA(Leu) + L-leucine + ATP = L-leucyl-tRNA(Leu) + AMP + diphosphate. The protein is Leucine--tRNA ligase of Streptococcus thermophilus (strain CNRZ 1066).